The following is a 646-amino-acid chain: Acetyl-coenzyme A synthetase (646 aa).

CoA is bound by residues 190–193 and threonine 309; that span reads RAGN. Residues 385–387, 409–414, aspartate 498, and arginine 513 each bind ATP; these read GEP and DTWWQT. Residue serine 521 coordinates CoA. Arginine 524 serves as a coordination point for ATP. Mg(2+)-binding residues include valine 535, histidine 537, and valine 540. Residue arginine 582 coordinates CoA. N6-acetyllysine is present on lysine 607.

The protein belongs to the ATP-dependent AMP-binding enzyme family. Mg(2+) is required as a cofactor. Acetylated. Deacetylation by the SIR2-homolog deacetylase activates the enzyme.

The enzyme catalyses acetate + ATP + CoA = acetyl-CoA + AMP + diphosphate. Catalyzes the conversion of acetate into acetyl-CoA (AcCoA), an essential intermediate at the junction of anabolic and catabolic pathways. AcsA undergoes a two-step reaction. In the first half reaction, AcsA combines acetate with ATP to form acetyl-adenylate (AcAMP) intermediate. In the second half reaction, it can then transfer the acetyl group from AcAMP to the sulfhydryl group of CoA, forming the product AcCoA. The sequence is that of Acetyl-coenzyme A synthetase from Pseudoalteromonas translucida (strain TAC 125).